A 347-amino-acid polypeptide reads, in one-letter code: Protein pelota homolog (347 aa).

Belongs to the eukaryotic release factor 1 family. Pelota subfamily. As to quaternary structure, monomer. The cofactor is a divalent metal cation.

The protein localises to the cytoplasm. Its function is as follows. May function in recognizing stalled ribosomes, interact with stem-loop structures in stalled mRNA molecules, and effect endonucleolytic cleavage of the mRNA. May play a role in the release non-functional ribosomes and degradation of damaged mRNAs. Has endoribonuclease activity. This chain is Protein pelota homolog, found in Methanococcoides burtonii (strain DSM 6242 / NBRC 107633 / OCM 468 / ACE-M).